Consider the following 127-residue polypeptide: Large ribosomal subunit protein bL20 (127 aa).

Belongs to the bacterial ribosomal protein bL20 family.

Functionally, binds directly to 23S ribosomal RNA and is necessary for the in vitro assembly process of the 50S ribosomal subunit. It is not involved in the protein synthesizing functions of that subunit. In Bifidobacterium adolescentis (strain ATCC 15703 / DSM 20083 / NCTC 11814 / E194a), this protein is Large ribosomal subunit protein bL20.